A 294-amino-acid polypeptide reads, in one-letter code: Glycine--tRNA ligase alpha subunit (294 aa).

This sequence belongs to the class-II aminoacyl-tRNA synthetase family. As to quaternary structure, tetramer of two alpha and two beta subunits.

It localises to the cytoplasm. The enzyme catalyses tRNA(Gly) + glycine + ATP = glycyl-tRNA(Gly) + AMP + diphosphate. The protein is Glycine--tRNA ligase alpha subunit of Oleidesulfovibrio alaskensis (strain ATCC BAA-1058 / DSM 17464 / G20) (Desulfovibrio alaskensis).